We begin with the raw amino-acid sequence, 307 residues long: 1D-myo-inositol 2-acetamido-2-deoxy-alpha-D-glucopyranoside deacetylase 1 (307 aa).

Residues histidine 21, aspartate 24, and histidine 157 each coordinate Zn(2+).

The protein belongs to the MshB deacetylase family. Requires Zn(2+) as cofactor.

It catalyses the reaction 1D-myo-inositol 2-acetamido-2-deoxy-alpha-D-glucopyranoside + H2O = 1D-myo-inositol 2-amino-2-deoxy-alpha-D-glucopyranoside + acetate. Its function is as follows. Catalyzes the deacetylation of 1D-myo-inositol 2-acetamido-2-deoxy-alpha-D-glucopyranoside (GlcNAc-Ins) in the mycothiol biosynthesis pathway. The chain is 1D-myo-inositol 2-acetamido-2-deoxy-alpha-D-glucopyranoside deacetylase 1 from Frankia casuarinae (strain DSM 45818 / CECT 9043 / HFP020203 / CcI3).